A 72-amino-acid polypeptide reads, in one-letter code: Large ribosomal subunit protein bL31 (72 aa).

Zn(2+) contacts are provided by Cys17, Cys19, Cys37, and Cys40.

Belongs to the bacterial ribosomal protein bL31 family. Type A subfamily. Part of the 50S ribosomal subunit. Zn(2+) is required as a cofactor.

In terms of biological role, binds the 23S rRNA. This is Large ribosomal subunit protein bL31 from Clostridium botulinum (strain ATCC 19397 / Type A).